The chain runs to 258 residues: UPF0246 protein YaaA (258 aa).

This sequence belongs to the UPF0246 family.

The sequence is that of UPF0246 protein YaaA from Escherichia coli O127:H6 (strain E2348/69 / EPEC).